Consider the following 824-residue polypeptide: Frameshifted structural polyprotein (824 aa).

The span at 1-10 shows a compositional bias: polar residues; that stretch reads MEFIPTQTFY. Residues 1–104 are disordered; that stretch reads MEFIPTQTFY…KKKKPGRRER (104 aa). Residues 22 to 44 are compositionally biased toward low complexity; the sequence is RPTIQVIRPRPRPQRQAGQLAQL. The tract at residues 36–68 is host transcription inhibition; that stretch reads RQAGQLAQLISAVNKLTMRAVPQQKPRKNRKNK. Positions 60–72 are enriched in basic residues; the sequence is KPRKNRKNKKQKQ. Residues 61 to 99 carry the Nuclear localization signal motif; the sequence is PRKNRKNKKQKQKQQAPQNNTNQKKQPPKKKPAQKKKKP. Residues 73-85 show a composition bias toward low complexity; sequence KQQAPQNNTNQKK. Residues 84–114 are binding to the viral RNA; sequence KKQPPKKKPAQKKKKPGRRERMCMKIENDCI. Residues 86–101 are compositionally biased toward basic residues; that stretch reads QPPKKKPAQKKKKPGR. Ribosome-binding regions lie at residues 91-100 and 99-113; these read KPAQKKKKPG and PGRR…ENDC. C113 and C128 are disulfide-bonded. Residues 113–261 form the Peptidase S3 domain; that stretch reads CIFEVKHEGK…KITPEGAEEW (149 aa). The active-site Charge relay system is H139. A Nuclear export signal motif is present at residues 144–154; the sequence is IDNADLAKLAF. D161 functions as the Charge relay system in the catalytic mechanism. Positions 183–193 are dimerization of the capsid protein; that stretch reads PEGYYNWHHGA. Catalysis depends on S213, which acts as the Charge relay system. Residues 219-223 are dimerization of the capsid protein; it reads DNKGR. Residues 262–274 are functions as an uncleaved signal peptide for the precursor of protein E3/E2; it reads SLAIPVMCLLANT. Residues 262-692 lie on the Extracellular side of the membrane; the sequence is SLAIPVMCLL…YYYELYPTMT (431 aa). N273, N588, and N670 each carry an N-linked (GlcNAc...) asparagine; by host glycan. A helical membrane pass occupies residues 693–713; that stretch reads VVVVSVASFILLSMVGMAVGM. Topologically, residues 714–748 are cytoplasmic; it reads CMCARRRCITPYELTPGATVPFLLSLICCIRTAKA. S-palmitoyl cysteine; by host attachment occurs at residues C721, C741, and C742. The tract at residues 721–741 is transient transmembrane before p62-6K protein processing; the sequence is CITPYELTPGATVPFLLSLIC. Over 749–763 the chain is Extracellular; the sequence is ATYQEAAVYLWNEQQ. The helical transmembrane segment at 764 to 784 threads the bilayer; that stretch reads PLFWLQALIPLAALIVLCNCL. The Cytoplasmic portion of the chain corresponds to 785–795; it reads RLLPCCCKTLA.

This sequence belongs to the alphavirus frameshifted structural polyprotein family. Homodimer. Homomultimer. Interacts with host karyopherin KPNA4; this interaction allows the nuclear import of the viral capsid protein. Interacts with spike glycoprotein E2. Interacts with host IRAK1; the interaction leads to inhibition of IRAK1-dependent signaling. As to quaternary structure, the precursor of protein E3/E2 and E1 form a heterodimer shortly after synthesis. In terms of assembly, processing of the precursor of protein E3/E2 into E2 and E3 results in a heterodimer of the spike glycoproteins E2 and E1. Spike at virion surface are constituted of three E2-E1 heterodimers. Interacts with 6K protein. Interacts with host MXRA8; this interaction mediates virus entry. Post-translationally, specific enzymatic cleavages in vivo yield mature proteins. Capsid protein is auto-cleaved during polyprotein translation, unmasking a signal peptide at the N-terminus of the precursor of E3/E2. The remaining polyprotein is then targeted to the host endoplasmic reticulum, where host signal peptidase cleaves it into pE2 and TF. pE2 is further processed to mature E3 and E2 by host furin in trans-Golgi vesicle. Palmitoylated via thioester bonds. These palmitoylations may induce disruption of the C-terminus transmembrane. This would result in the reorientation of E2 C-terminus from lumenal to cytoplasmic side. In terms of processing, palmitoylated via thioester bonds.

The protein resides in the virion. It localises to the host cytoplasm. It is found in the host cell membrane. Its subcellular location is the host nucleus. The protein localises to the virion membrane. It carries out the reaction Autocatalytic release of the core protein from the N-terminus of the togavirus structural polyprotein by hydrolysis of a -Trp-|-Ser- bond.. In terms of biological role, forms an icosahedral capsid with a T=4 symmetry composed of 240 copies of the capsid protein surrounded by a lipid membrane through which penetrate 80 spikes composed of trimers of E1-E2 heterodimers. The capsid protein binds to the viral RNA genome at a site adjacent to a ribosome binding site for viral genome translation following genome release. Possesses a protease activity that results in its autocatalytic cleavage from the nascent structural protein. Following its self-cleavage, the capsid protein transiently associates with ribosomes, and within several minutes the protein binds to viral RNA and rapidly assembles into icosahedric core particles. The resulting nucleocapsid eventually associates with the cytoplasmic domain of the spike glycoprotein E2 at the cell membrane, leading to budding and formation of mature virions. In case of infection, new virions attach to target cells and after clathrin-mediated endocytosis their membrane fuses with the host endosomal membrane. This leads to the release of the nucleocapsid into the cytoplasm, followed by an uncoating event necessary for the genomic RNA to become accessible. The uncoating might be triggered by the interaction of capsid proteins with ribosomes. Binding of ribosomes would release the genomic RNA since the same region is genomic RNA-binding and ribosome-binding. Specifically inhibits interleukin-1 receptor-associated kinase 1/IRAK1-dependent signaling during viral entry, representing a means by which the alphaviruses may evade innate immune detection and activation prior to viral gene expression. Its function is as follows. Provides the signal sequence for the translocation of the precursor of protein E3/E2 to the host endoplasmic reticulum. Furin-cleaved E3 remains associated with spike glycoprotein E1 and mediates pH protection of the latter during the transport via the secretory pathway. After virion release from the host cell, the assembly protein E3 is gradually released in the extracellular space. Plays a role in viral attachment to target host cell, by binding to the cell receptor. Synthesized as a p62 precursor which is processed by furin at the cell membrane just before virion budding, giving rise to E2-E1 heterodimer. The p62-E1 heterodimer is stable, whereas E2-E1 is unstable and dissociate at low pH. p62 is processed at the last step, presumably to avoid E1 fusion activation before its final export to cell surface. E2 C-terminus contains a transitory transmembrane that would be disrupted by palmitoylation, resulting in reorientation of the C-terminal tail from lumenal to cytoplasmic side. This step is critical since E2 C-terminus is involved in budding by interacting with capsid proteins. This release of E2 C-terminus in cytoplasm occurs lately in protein export, and precludes premature assembly of particles at the endoplasmic reticulum membrane. Functionally, plays a role in viral assembly and release. The sequence is that of Frameshifted structural polyprotein from Aedes aegypti (Yellowfever mosquito).